Consider the following 102-residue polypeptide: Small ribosomal subunit protein uS10 (102 aa).

The protein belongs to the universal ribosomal protein uS10 family. As to quaternary structure, part of the 30S ribosomal subunit.

In terms of biological role, involved in the binding of tRNA to the ribosomes. The polypeptide is Small ribosomal subunit protein uS10 (Moorella thermoacetica (strain ATCC 39073 / JCM 9320)).